The primary structure comprises 194 residues: MTAARNIPTFDDLPLPADTANLRHGANLHDALLALLPLVGVWRGEGEGRGPHGDYRFGQQIVVSHDGGDYLNWEARSWRLDEDGQYEEPGLRETGFWRFVSDPEDDPSESQAIELLLAHSAGYVELFYGRPLTQSSWELVTDALARSRSGVLVGGAKRLYGIIEGGDLAYVEERVDADGGLVPHLSARLSRYAG.

Residues 40-46 (GVWRGEG) carry the GXWXGXG motif. Heme b is bound by residues Lys157 and His184.

Belongs to the nitrobindin family. As to quaternary structure, homodimer. The cofactor is heme b.

It carries out the reaction peroxynitrite = nitrate. It participates in nitrogen metabolism. In terms of biological role, heme-binding protein able to scavenge peroxynitrite and to protect free L-tyrosine against peroxynitrite-mediated nitration, by acting as a peroxynitrite isomerase that converts peroxynitrite to nitrate. Therefore, this protein likely plays a role in peroxynitrite sensing and in the detoxification of reactive nitrogen and oxygen species (RNS and ROS, respectively). Is able to bind nitric oxide (NO) in vitro, but may act as a sensor of peroxynitrite levels in vivo. The polypeptide is Peroxynitrite isomerase 1 (Mycobacterium ulcerans (strain Agy99)).